A 378-amino-acid chain; its full sequence is Probable 3-hydroxyisobutyryl-CoA hydrolase 3 (378 aa).

The substrate site is built by Glu138 and Asp146.

It belongs to the enoyl-CoA hydratase/isomerase family.

It is found in the peroxisome. The catalysed reaction is 3-hydroxy-2-methylpropanoyl-CoA + H2O = 3-hydroxy-2-methylpropanoate + CoA + H(+). Its pathway is amino-acid degradation; L-valine degradation. Functionally, involved in valine catabolism. This is Probable 3-hydroxyisobutyryl-CoA hydrolase 3 from Arabidopsis thaliana (Mouse-ear cress).